Reading from the N-terminus, the 416-residue chain is E3 ubiquitin-protein ligase RNFT1 (416 aa).

Disordered stretches follow at residues 1–50 (MKHR…MSLP) and 68–117 (DLSS…DSRE). The span at 7-19 (HERQSSTESKNLK) shows a compositional bias: basic and acidic residues. Composition is skewed to polar residues over residues 20–45 (ETTQ…SPSA) and 68–80 (DLSS…VARS). The segment covering 81–100 (NSRRVRPSTHGRSPSRHGHT) has biased composition (basic residues). Transmembrane regions (helical) follow at residues 146–166 (LVVQ…TFLY), 184–204 (LQCL…YYTF), 214–234 (VFMN…VVGI), 237–257 (FIGK…PSFV), 265–287 (YWYM…PVWF), and 302–322 (WHFG…IIFG). The tract at residues 349–400 (CSEADGMCAICQAEFTKPIALICQHVFCEECISSWFNKEKTCPLCRTLISNH) is required for ubiquitin ligase activity and for protection against ER stress-induced cell death. An RING-type zinc finger spans residues 356 to 394 (CAICQAEFTKPIALICQHVFCEECISSWFNKEKTCPLCR).

It localises to the endoplasmic reticulum membrane. The catalysed reaction is S-ubiquitinyl-[E2 ubiquitin-conjugating enzyme]-L-cysteine + [acceptor protein]-L-lysine = [E2 ubiquitin-conjugating enzyme]-L-cysteine + N(6)-ubiquitinyl-[acceptor protein]-L-lysine.. It functions in the pathway protein modification; protein ubiquitination. In terms of biological role, E3 ubiquitin-protein ligase that acts in the endoplasmic reticulum (ER)-associated degradation (ERAD) pathway, which targets misfolded proteins that accumulate in the endoplasmic reticulum (ER) for ubiquitination and subsequent proteasome-mediated degradation. Protects cells from ER stress-induced apoptosis. The chain is E3 ubiquitin-protein ligase RNFT1 (rnft1) from Xenopus laevis (African clawed frog).